Reading from the N-terminus, the 93-residue chain is Large ribosomal subunit protein uL23cz/uL23cy (93 aa).

This sequence belongs to the universal ribosomal protein uL23 family. As to quaternary structure, part of the 50S ribosomal subunit.

It is found in the plastid. It localises to the chloroplast. Its function is as follows. Binds to 23S rRNA. In Eucalyptus globulus subsp. globulus (Tasmanian blue gum), this protein is Large ribosomal subunit protein uL23cz/uL23cy (rpl23-A).